A 101-amino-acid polypeptide reads, in one-letter code: Ascorbate-specific PTS system EIIB component (101 aa).

The PTS EIIB type-2 domain maps to 1–100 (MTVRILAVCG…VIKEHFPQDV (100 aa)). Cys9 (phosphocysteine intermediate) is an active-site residue. A Phosphocysteine modification is found at Cys9.

The protein localises to the cytoplasm. The catalysed reaction is N(pros)-phospho-L-histidyl-[protein] + L-ascorbate(out) = L-ascorbate 6-phosphate(in) + L-histidyl-[protein]. Its function is as follows. The phosphoenolpyruvate-dependent sugar phosphotransferase system (sugar PTS), a major carbohydrate active transport system, catalyzes the phosphorylation of incoming sugar substrates concomitantly with their translocation across the cell membrane. The enzyme II UlaABC PTS system is involved in ascorbate transport. This is Ascorbate-specific PTS system EIIB component (ulaB) from Escherichia coli O157:H7.